The primary structure comprises 264 residues: uncharacterized protein (264 aa).

Positions 1–16 (MKGKSALTLLLAGIFS) are cleaved as a signal peptide. Cys-17 is lipidated: N-palmitoyl cysteine. Cys-17 carries S-diacylglycerol cysteine lipidation.

It localises to the cell inner membrane. This is an uncharacterized protein from Escherichia coli (strain K12).